We begin with the raw amino-acid sequence, 1481 residues long: ABC-type transporter braE (1481 aa).

6 helical membrane-spanning segments follow: residues 27 to 47, 86 to 106, 130 to 150, 159 to 179, 269 to 289, and 308 to 328; these read FTVK…FILA, LILI…SSAL, IFLS…ARTY, EIAF…MLLL, LYVP…SFFC, and PANI…VIAI. The region spanning 281 to 549 is the ABC transmembrane type-1 1 domain; that stretch reads LAAIGSFFCQ…LLETLPQMAA (269 aa). Residue asparagine 367 is glycosylated (N-linked (GlcNAc...) asparagine). 3 consecutive transmembrane segments (helical) span residues 389–409, 410–430, and 491–511; these read ELWG…NLLG, VAFI…SFFM, and LMLT…PITF. The 230-residue stretch at 594 to 823 folds into the ABC transporter 1 domain; that stretch reads VAIKDGSFGW…QSYIHSLGVK (230 aa). An ATP-binding site is contributed by 627-634; the sequence is GPIASGKS. Residues asparagine 671 and asparagine 813 are each glycosylated (N-linked (GlcNAc...) asparagine). 6 helical membrane-spanning segments follow: residues 887–907, 928–948, 1001–1021, 1026–1046, 1111–1131, and 1144–1164; these read IAIF…TIWL, AIYA…GVLL, SALL…AVIA, YLAI…KFYL, LHFV…SLAV, and LVTL…YTAL. The ABC transmembrane type-1 2 domain maps to 887 to 1166; sequence IAIFTSGLLY…VVIYYTALET (280 aa). N-linked (GlcNAc...) asparagine glycans are attached at residues asparagine 1207 and asparagine 1232. An ABC transporter 2 domain is found at 1224–1477; that stretch reads LTTNELSSND…PGTRFGELWS (254 aa). 1260-1267 provides a ligand contact to ATP; the sequence is GRTGSGKS. N-linked (GlcNAc...) asparagine glycosylation is found at asparagine 1330 and asparagine 1364.

This sequence belongs to the ABC transporter superfamily. ABCC family. Conjugate transporter (TC 3.A.1.208) subfamily.

The protein resides in the membrane. Functionally, ABC-type transporter; part of the gene cluster that mediates the biosynthesis of the brasilane terpene glycosides brasilane D and E. This chain is ABC-type transporter braE, found in Annulohypoxylon truncatum (Hypoxylon truncatum).